The sequence spans 436 residues: GTPase Der (436 aa).

2 EngA-type G domains span residues 4–167 (PTVA…PVEE) and 175–351 (IRFS…ESQN). Residues 10 to 17 (GRPNVGKS), 57 to 61 (DTGGI), 119 to 122 (NKVD), 181 to 188 (GRPNVGKS), 229 to 233 (DTAGM), and 294 to 297 (NKWD) each bind GTP. The 85-residue stretch at 352–436 (KRIPSAVLND…PIHLIARKRK (85 aa)) folds into the KH-like domain.

Belongs to the TRAFAC class TrmE-Era-EngA-EngB-Septin-like GTPase superfamily. EngA (Der) GTPase family. As to quaternary structure, associates with the 50S ribosomal subunit.

GTPase that plays an essential role in the late steps of ribosome biogenesis. This chain is GTPase Der, found in Streptococcus pyogenes serotype M5 (strain Manfredo).